The following is a 517-amino-acid chain: T-complex protein 11-like protein 2 (517 aa).

Positions 1 to 59 (MPFNGEKQCVSEDQQSDSESSRFAEGVASLSDYECSRQSFTSDSSSKSSSPASTSPPRG) are disordered. Ser-16 bears the Phosphoserine mark. A compositionally biased stretch (low complexity) spans 36-55 (SRQSFTSDSSSKSSSPASTS).

It belongs to the TCP11 family. Interacts with FMNL2; this interaction promotes muscle-derived satellite cell (MDSC) migration and differentiation.

Its subcellular location is the cytoplasm. It is found in the cytoskeleton. In terms of biological role, promotes the migration of muscle-derived satellite cells (MDSCs) during differentiation throught interaction with FMNL2 and therefore may participate in microfilament assembly. This is T-complex protein 11-like protein 2 from Mus musculus (Mouse).